The chain runs to 154 residues: uncharacterized protein (154 aa).

The next 4 membrane-spanning stretches (helical) occupy residues 20–42 (FRLF…GQFG), 62–84 (FFGY…AVLL), 91–109 (ALGA…LINY), and 113–132 (IGVQ…LLWM).

It is found in the cell membrane. This is an uncharacterized protein from Bacillus subtilis (strain 168).